The chain runs to 1007 residues: Lysosomal alpha-mannosidase (1007 aa).

Low complexity-rich tracts occupy residues 1 to 10 (MGADARPLGV) and 19 to 28 (AARPGTSSRA). The tract at residues 1 to 30 (MGADARPLGVRAGGGGRGAARPGTSSRALP) is disordered. Residues 1-50 (MGADARPLGVRAGGGGRGAARPGTSSRALPPPLPPLSFLLLLLAAPGARA) form the signal peptide. 2 cysteine pairs are disulfide-bonded: cysteine 56–cysteine 360 and cysteine 269–cysteine 274. The Zn(2+) site is built by histidine 73 and aspartate 75. Asparagine 134 carries an N-linked (GlcNAc...) asparagine glycan. Zn(2+) is bound at residue aspartate 197. Aspartate 197 functions as the Nucleophile in the catalytic mechanism. N-linked (GlcNAc...) asparagine glycans are attached at residues asparagine 311, asparagine 347, and asparagine 369. Intrachain disulfides connect cysteine 414–cysteine 474 and cysteine 495–cysteine 503. Position 448 (histidine 448) interacts with Zn(2+). Asparagine 499, asparagine 543, asparagine 643, asparagine 649, asparagine 690, asparagine 764, and asparagine 927 each carry an N-linked (GlcNAc...) asparagine glycan.

Belongs to the glycosyl hydrolase 38 family. The cofactor is Zn(2+). Processed into 3 peptides of 72 kDa, 41 kDa and 12 kDa.

The protein resides in the lysosome. It carries out the reaction Hydrolysis of terminal, non-reducing alpha-D-mannose residues in alpha-D-mannosides.. Functionally, necessary for the catabolism of N-linked carbohydrates released during glycoprotein turnover. The polypeptide is Lysosomal alpha-mannosidase (MAN2B1) (Felis catus (Cat)).